A 450-amino-acid polypeptide reads, in one-letter code: MSNHKEFSEALKVIPGGVDSPVRAFKNVGSEPFMVQKGKGAYIYDIEGNKYLDFVQSWGPLIFGHADKDIQDAVIKTAKSGLSFGASSPLETKLAKLILSKFDWLDKIRFVSSGTEATMSAIRLARGFSGKDKIIKFEGCYHGHSDSLLVKAGSGATTFGSSSSAGVPEDTAKNTYLAIYNDIDSVKNIVEKEDIGTIIIEPIAGNMGLVPADKEFLIKLRKICDEKKIVLILDEVMSGFRAGELGSYGIYGIKGDIVTFGKVIGGGMNVAAFAGKKEIMDMISPLGPVYQAGTLSGNPVSMAAGIASLTKIFASRNLYTKLENLANMFMIGLKNIAKNHGIAIQVAVRGSMFGYFFTDKAVKNYNDALSADTKMFAKFHSGMIKEGIFLAPSQFETGFICDAMSEKEINFALKKANKVFDEISKDSAKKANKTKICSKKTVKKSVKNKK.

The residue at position 262 (Lys-262) is an N6-(pyridoxal phosphate)lysine.

It belongs to the class-III pyridoxal-phosphate-dependent aminotransferase family. HemL subfamily. Homodimer. Requires pyridoxal 5'-phosphate as cofactor.

It localises to the cytoplasm. It carries out the reaction (S)-4-amino-5-oxopentanoate = 5-aminolevulinate. It functions in the pathway porphyrin-containing compound metabolism; protoporphyrin-IX biosynthesis; 5-aminolevulinate from L-glutamyl-tRNA(Glu): step 2/2. The chain is Glutamate-1-semialdehyde 2,1-aminomutase from Campylobacter hominis (strain ATCC BAA-381 / DSM 21671 / CCUG 45161 / LMG 19568 / NCTC 13146 / CH001A).